Reading from the N-terminus, the 1360-residue chain is Activating molecule in BECN1-regulated autophagy protein 1B (1360 aa).

WD repeat units lie at residues 50–89 (DNPR…CLHS), 92–132 (GHRR…ESWF), and 134–174 (ESNV…AVVK). Polar residues predominate over residues 249-258 (RSSGAQANDQ). Disordered regions lie at residues 249 to 277 (RSSG…FQYP), 315 to 364 (PTGL…NSAH), 412 to 490 (GVET…QRNN), 514 to 573 (ELER…RCRS), 587 to 616 (WERS…EDPG), 664 to 688 (PTVS…NPDE), and 754 to 796 (TLSN…MPRN). Low complexity predominate over residues 319–333 (QPSDSTQPQTQSGPS). Residues 350–361 (AFSSVFSGTAGN) show a composition bias toward polar residues. Residues 428–437 (SSSSMDLLSL) are compositionally biased toward low complexity. Polar residues-rich tracts occupy residues 443–454 (GSSSSPIYTSAT) and 473–490 (DGTS…QRNN). A compositionally biased stretch (low complexity) spans 590 to 607 (SGQTSSSSSSQEGPSWPL). Residues 754–768 (TLSNSQADSQSNNPS) are compositionally biased toward polar residues. Residues 775 to 784 (SDGDYEDIEE) are compositionally biased toward acidic residues. 2 short sequence motifs (TQT motif) span residues 1109–1111 (TQT) and 1121–1123 (TQT). Disordered stretches follow at residues 1120–1142 (ETQT…TSRH) and 1241–1360 (SQTS…LYGR). Polar residues-rich tracts occupy residues 1129-1142 (SAST…TSRH) and 1241-1252 (SQTSVRTAQGGN). A compositionally biased stretch (low complexity) spans 1278–1288 (APGPSGSSGAP). A compositionally biased stretch (basic and acidic residues) spans 1311–1321 (FGDRQPDDVQR). Positions 1329–1347 (NMSNHSNNNNNDHSNSYSE) are enriched in low complexity. The span at 1348 to 1360 (SRSRDYPDDLYGR) shows a compositional bias: basic and acidic residues.

This sequence belongs to the WD repeat AMBRA1 family. Component of the DCX(AMBRA1) E3 ubiquitin ligase complex.

The protein localises to the endoplasmic reticulum. The protein resides in the cytoplasm. Its subcellular location is the cytoskeleton. It localises to the cytoplasmic vesicle. It is found in the autophagosome. The protein localises to the mitochondrion. The protein resides in the cytosol. Its subcellular location is the nucleus. It localises to the cell junction. It is found in the focal adhesion. It participates in protein modification; protein ubiquitination. Substrate-recognition component of a DCX (DDB1-CUL4-X-box) E3 ubiquitin-protein ligase complex involved in cell cycle control and autophagy. The DCX(AMBRA1) complex specifically mediates the polyubiquitination of target proteins. Acts as an upstream master regulator of the transition from G1 to S cell phase: ambra1b specifically recognizes and binds phosphorylated cyclin-D (ccnd1, ccnd2 and ccnd3), leading to cyclin-D ubiquitination by the DCX(AMBRA1) complex and subsequent degradation. Acts as a regulator of Cul5-RING (CRL5) E3 ubiquitin-protein ligase complexes by mediating ubiquitination and degradation of Elongin-C (eloc) component of CRL5 complexes. Acts as a key regulator of autophagy by modulating the BECN1-PIK3C3 complex: controls protein turnover during neuronal development, and regulates normal cell survival and proliferation. In normal conditions, ambra1b is tethered to the cytoskeleton via interaction with dyneins light chains. Upon autophagy induction, ambra1b is released from the cytoskeletal docking site to induce autophagosome nucleation by mediating ubiquitination of proteins involved in autophagy. Also acts as an activator of mitophagy. Required for skeletal muscle development. This chain is Activating molecule in BECN1-regulated autophagy protein 1B, found in Danio rerio (Zebrafish).